A 360-amino-acid polypeptide reads, in one-letter code: DNA replication and repair protein RecF (360 aa).

ATP is bound at residue 30–37 (GQNGSGKT).

The protein belongs to the RecF family.

It is found in the cytoplasm. Functionally, the RecF protein is involved in DNA metabolism; it is required for DNA replication and normal SOS inducibility. RecF binds preferentially to single-stranded, linear DNA. It also seems to bind ATP. The polypeptide is DNA replication and repair protein RecF (Shewanella baltica (strain OS155 / ATCC BAA-1091)).